The sequence spans 78 residues: Sec-independent protein translocase protein TatA (78 aa).

Residues 1–21 (MGGISIWQLLIIAVIVVLLFG) form a helical membrane-spanning segment. Residues 47–59 (ESEKKDADFEPKS) are compositionally biased toward basic and acidic residues. The tract at residues 47–78 (ESEKKDADFEPKSLEQQSKQAATESKKDKEQA) is disordered. Polar residues predominate over residues 60 to 69 (LEQQSKQAAT).

Belongs to the TatA/E family. The Tat system comprises two distinct complexes: a TatABC complex, containing multiple copies of TatA, TatB and TatC subunits, and a separate TatA complex, containing only TatA subunits. Substrates initially bind to the TatABC complex, which probably triggers association of the separate TatA complex to form the active translocon.

The protein localises to the cell inner membrane. In terms of biological role, part of the twin-arginine translocation (Tat) system that transports large folded proteins containing a characteristic twin-arginine motif in their signal peptide across membranes. TatA could form the protein-conducting channel of the Tat system. In Vibrio vulnificus (strain CMCP6), this protein is Sec-independent protein translocase protein TatA.